A 212-amino-acid polypeptide reads, in one-letter code: Large ribosomal subunit protein uL1 (212 aa).

This sequence belongs to the universal ribosomal protein uL1 family. Part of the 50S ribosomal subunit.

In terms of biological role, binds directly to 23S rRNA. Probably involved in E site tRNA release. Functionally, protein L1 is also a translational repressor protein, it controls the translation of its operon by binding to its mRNA. This chain is Large ribosomal subunit protein uL1, found in Methanothrix thermoacetophila (strain DSM 6194 / JCM 14653 / NBRC 101360 / PT) (Methanosaeta thermophila).